Consider the following 101-residue polypeptide: MAKKSMIAKNEQRKVIVERYAAKRLELKKALVDPASTDEAREAARLGLQKLPRNASPVRLRNRDIIDGRPRGTFQKFGISRVRFRDMAHRGELPGITKSSW.

It belongs to the universal ribosomal protein uS14 family. Part of the 30S ribosomal subunit. Contacts proteins S3 and S10.

Its function is as follows. Binds 16S rRNA, required for the assembly of 30S particles and may also be responsible for determining the conformation of the 16S rRNA at the A site. The chain is Small ribosomal subunit protein uS14 from Arthrobacter sp. (strain FB24).